The following is a 328-amino-acid chain: Malate dehydrogenase (328 aa).

Position 11–17 (11–17 (GAAGQIG)) interacts with NAD(+). The substrate site is built by Arg-94 and Arg-100. Residues Asn-107, Gln-114, and 131 to 133 (VGN) each bind NAD(+). Substrate-binding residues include Asn-133 and Arg-164. His-189 acts as the Proton acceptor in catalysis.

This sequence belongs to the LDH/MDH superfamily. MDH type 2 family.

The catalysed reaction is (S)-malate + NAD(+) = oxaloacetate + NADH + H(+). Functionally, catalyzes the reversible oxidation of malate to oxaloacetate. The protein is Malate dehydrogenase of Xylella fastidiosa (strain Temecula1 / ATCC 700964).